Here is a 121-residue protein sequence, read N- to C-terminus: Small ribosomal subunit protein uS13 (121 aa).

The tract at residues 93–121 is disordered; it reads RHLPVRGQNTKNNARTRKGPAVSIAGKKK.

It belongs to the universal ribosomal protein uS13 family. As to quaternary structure, part of the 30S ribosomal subunit. Forms a loose heterodimer with protein S19. Forms two bridges to the 50S subunit in the 70S ribosome.

Its function is as follows. Located at the top of the head of the 30S subunit, it contacts several helices of the 16S rRNA. In the 70S ribosome it contacts the 23S rRNA (bridge B1a) and protein L5 of the 50S subunit (bridge B1b), connecting the 2 subunits; these bridges are implicated in subunit movement. Contacts the tRNAs in the A and P-sites. The protein is Small ribosomal subunit protein uS13 of Ligilactobacillus salivarius (strain UCC118) (Lactobacillus salivarius).